A 235-amino-acid chain; its full sequence is Large ribosomal subunit protein uL1 (235 aa).

Belongs to the universal ribosomal protein uL1 family. In terms of assembly, part of the 50S ribosomal subunit.

Functionally, binds directly to 23S rRNA. The L1 stalk is quite mobile in the ribosome, and is involved in E site tRNA release. Protein L1 is also a translational repressor protein, it controls the translation of the L11 operon by binding to its mRNA. This is Large ribosomal subunit protein uL1 from Mycolicibacterium vanbaalenii (strain DSM 7251 / JCM 13017 / BCRC 16820 / KCTC 9966 / NRRL B-24157 / PYR-1) (Mycobacterium vanbaalenii).